A 376-amino-acid polypeptide reads, in one-letter code: Actin-related protein T1 (376 aa).

Belongs to the actin family.

It localises to the cytoplasm. It is found in the cytoskeleton. The protein localises to the nucleus. The protein resides in the cytoplasmic vesicle. Its subcellular location is the secretory vesicle. It localises to the acrosome. Its function is as follows. Negatively regulates the Hedgehog (SHH) signaling. Binds to the promoter of the SHH signaling mediator, GLI1, and inhibits its expression. This Mus musculus (Mouse) protein is Actin-related protein T1 (Actrt1).